We begin with the raw amino-acid sequence, 99 residues long: NADH-ubiquinone oxidoreductase chain 2 (99 aa).

The next 2 membrane-spanning stretches (helical) occupy residues 22–42 and 65–85; these read FLTF…IQII and VMIS…SIFI.

The protein belongs to the complex I subunit 2 family.

The protein resides in the mitochondrion inner membrane. It carries out the reaction a ubiquinone + NADH + 5 H(+)(in) = a ubiquinol + NAD(+) + 4 H(+)(out). Functionally, core subunit of the mitochondrial membrane respiratory chain NADH dehydrogenase (Complex I) that is believed to belong to the minimal assembly required for catalysis. Complex I functions in the transfer of electrons from NADH to the respiratory chain. The immediate electron acceptor for the enzyme is believed to be ubiquinone. This is NADH-ubiquinone oxidoreductase chain 2 (ND2) from Cyanidium caldarium (Red alga).